The chain runs to 144 residues: Large ribosomal subunit protein uL16 (144 aa).

Over residues 1 to 19 (MLLPKRVKYRRQHRPKTTG) the composition is skewed to basic residues. Positions 1–23 (MLLPKRVKYRRQHRPKTTGRSKG) are disordered.

It belongs to the universal ribosomal protein uL16 family. Part of the 50S ribosomal subunit.

Functionally, binds 23S rRNA and is also seen to make contacts with the A and possibly P site tRNAs. This chain is Large ribosomal subunit protein uL16, found in Staphylococcus haemolyticus (strain JCSC1435).